The primary structure comprises 560 residues: RNA polymerase-associated protein C651.09c (560 aa).

2 disordered regions span residues 15 to 74 (DDSD…KNPY) and 128 to 207 (YMAQ…KVEQ). Basic and acidic residues predominate over residues 148–171 (GKRDKLTELKKRRQERSARSVSER). The segment covering 180–195 (DYEEQNESEKSEEEEG) has biased composition (acidic residues). At serine 197 the chain carries Phosphoserine. Residues 214-345 (SANLYDLNAI…KLNDLRDMSK (132 aa)) enclose the Plus3 domain. Positions 387 to 456 (AGNAELVKEI…RRRLSAAATA (70 aa)) form a coiled coil. Basic and acidic residues predominate over residues 440 to 449 (EQRMNEERRR). Residues 440 to 486 (EQRMNEERRRLSAAATATPMSAPTSVLTGTSPQPSPSLSTSIMSTPK) are disordered. A compositionally biased stretch (low complexity) spans 451–480 (SAAATATPMSAPTSVLTGTSPQPSPSLSTS). A phosphoserine mark is found at serine 502 and serine 506.

Component of the PAF1 complex.

The protein localises to the nucleus. Its subcellular location is the nucleoplasm. Functionally, the PAF1 complex is a multifunctional complex. Involved in transcription initiation via genetic interactions with TATA-binding proteins. Involved in elongation. Also has a role in transcription-coupled histone modification. Important for TATA site selection by TBP. Directly or indirectly regulates the DNA-binding properties of the TATA box-binding protein, and the relative activities of different TATA elements. This is RNA polymerase-associated protein C651.09c from Schizosaccharomyces pombe (strain 972 / ATCC 24843) (Fission yeast).